Here is a 407-residue protein sequence, read N- to C-terminus: MEIILGVVMFTLIVLALTVMILFAKSKLVNTGDITIDINEDADKSFTAPAGDKLLNMLSSHGIFVSSACGGGGSCGQCRVTIKEGGGDILPTELSHISKREAKEGCRLACQVSVKQNLKIELPEEIFGVKKWECEVISNDNKATFIKELKLKIPDGEVVPFRAGGFIQIEAEPHTVKYADFDVPEEYRGDWDKFNLFRFESVVAEPTVRAYSMANYPEEHGIIMLNVRIATPPPSVPDAPPGIMSSYIWSLKPGDKVVISGPFGEFFAKDTDAEMVFIGGGAGMAPMRSHIFDQLKRLHSKRRISFWYGARSRREMFYEEDFDQLQAENDNFRWHVALSDPQPEDNWTGYTGFIHNVLLENYLKNHPAPEDCEFYMCGPPMMNAAVIKMLKDLGVEDENIMLDDFGG.

A helical transmembrane segment spans residues 3-23 (IILGVVMFTLIVLALTVMILF). A 2Fe-2S ferredoxin-type domain is found at 32 to 126 (GDITIDINED…NLKIELPEEI (95 aa)). 4 residues coordinate [2Fe-2S] cluster: C69, C75, C78, and C110. Positions 129 to 269 (VKKWECEVIS…SGPFGEFFAK (141 aa)) constitute an FAD-binding FR-type domain.

This sequence belongs to the NqrF family. In terms of assembly, composed of six subunits; NqrA, NqrB, NqrC, NqrD, NqrE and NqrF. [2Fe-2S] cluster serves as cofactor. FAD is required as a cofactor.

Its subcellular location is the cell inner membrane. The enzyme catalyses a ubiquinone + n Na(+)(in) + NADH + H(+) = a ubiquinol + n Na(+)(out) + NAD(+). Functionally, NQR complex catalyzes the reduction of ubiquinone-1 to ubiquinol by two successive reactions, coupled with the transport of Na(+) ions from the cytoplasm to the periplasm. The first step is catalyzed by NqrF, which accepts electrons from NADH and reduces ubiquinone-1 to ubisemiquinone by a one-electron transfer pathway. The protein is Na(+)-translocating NADH-quinone reductase subunit F of Yersinia enterocolitica serotype O:8 / biotype 1B (strain NCTC 13174 / 8081).